The following is a 107-amino-acid chain: uncharacterized protein (107 aa).

Residues Ser-80–Ala-98 show a composition bias toward polar residues. Residues Ser-80–Glu-107 form a disordered region.

This is an uncharacterized protein from Human spumaretrovirus (SFVcpz(hu)).